Reading from the N-terminus, the 204-residue chain is Guanylate kinase (204 aa).

In terms of domain architecture, Guanylate kinase-like spans 5–184; that stretch reads GLLIVLSGPS…ACDKIKAIVL (180 aa). 12–19 lines the ATP pocket; it reads GPSGVGKG.

Belongs to the guanylate kinase family.

Its subcellular location is the cytoplasm. It catalyses the reaction GMP + ATP = GDP + ADP. In terms of biological role, essential for recycling GMP and indirectly, cGMP. The protein is Guanylate kinase (gmk) of Bacillus subtilis (strain 168).